The chain runs to 262 residues: Phosphatidylserine decarboxylase proenzyme (262 aa).

Residues Asp86, His142, and Ser226 each act as charge relay system; for autoendoproteolytic cleavage activity in the active site. Ser226 serves as the catalytic Schiff-base intermediate with substrate; via pyruvic acid; for decarboxylase activity. A Pyruvic acid (Ser); by autocatalysis modification is found at Ser226.

It belongs to the phosphatidylserine decarboxylase family. PSD-B subfamily. Prokaryotic type I sub-subfamily. As to quaternary structure, heterodimer of a large membrane-associated beta subunit and a small pyruvoyl-containing alpha subunit. Pyruvate serves as cofactor. Is synthesized initially as an inactive proenzyme. Formation of the active enzyme involves a self-maturation process in which the active site pyruvoyl group is generated from an internal serine residue via an autocatalytic post-translational modification. Two non-identical subunits are generated from the proenzyme in this reaction, and the pyruvate is formed at the N-terminus of the alpha chain, which is derived from the carboxyl end of the proenzyme. The autoendoproteolytic cleavage occurs by a canonical serine protease mechanism, in which the side chain hydroxyl group of the serine supplies its oxygen atom to form the C-terminus of the beta chain, while the remainder of the serine residue undergoes an oxidative deamination to produce ammonia and the pyruvoyl prosthetic group on the alpha chain. During this reaction, the Ser that is part of the protease active site of the proenzyme becomes the pyruvoyl prosthetic group, which constitutes an essential element of the active site of the mature decarboxylase.

The protein resides in the cell membrane. It carries out the reaction a 1,2-diacyl-sn-glycero-3-phospho-L-serine + H(+) = a 1,2-diacyl-sn-glycero-3-phosphoethanolamine + CO2. It functions in the pathway phospholipid metabolism; phosphatidylethanolamine biosynthesis; phosphatidylethanolamine from CDP-diacylglycerol: step 2/2. Functionally, catalyzes the formation of phosphatidylethanolamine (PtdEtn) from phosphatidylserine (PtdSer). This chain is Phosphatidylserine decarboxylase proenzyme, found in Bacillus thuringiensis subsp. konkukian (strain 97-27).